The primary structure comprises 1272 residues: Protein diaphanous homolog 1 (1272 aa).

Methionine 1 is modified (N-acetylmethionine). Positions 1–12 (MEPPGGSLGPGR) are enriched in gly residues. The tract at residues 1 to 84 (MEPPGGSLGP…YGDDPTAQSL (84 aa)) is disordered. Phosphoserine occurs at positions 7, 22, and 36. Residues 44–65 (LMADELERFTSMRIKKEKEKPN) show a composition bias toward basic and acidic residues. A compositionally biased stretch (polar residues) spans 67–84 (AHRNSSASYGDDPTAQSL). The region spanning 84–449 (LQDVSDEQVL…QIVLHKNGAD (366 aa)) is the GBD/FH3 domain. Positions 468-572 (MIDKTKVEKS…ASLSAAAITV (105 aa)) form a coiled coil. A disordered region spans residues 573 to 755 (PPSVPSRAPV…GMPPPPPFGF (183 aa)). 3 stretches are compositionally biased toward pro residues: residues 574–589 (PSVP…PPLP), 596–622 (IPPP…PPLP), and 640–658 (SPPP…PPLP). In terms of domain architecture, FH1 spans 583–764 (PPAPPLPGDS…FGVPAAPVLP (182 aa)). Residues 659 to 674 (EGVGIPSPSSLPGGTA) are compositionally biased toward low complexity. The segment covering 675–753 (IPPPPPLPGS…GMGMPPPPPF (79 aa)) has biased composition (pro residues). The residue at position 768 (threonine 768) is a Phosphothreonine. The FH2 domain maps to 769-1171 (PKKLYKPEVQ…MRRAKLAKEK (403 aa)). The stretch at 1039-1196 (DELAHVEKAS…IDMNAEGDET (158 aa)) forms a coiled coil. An N6-acetyllysine mark is found at lysine 1057 and lysine 1103. Tyrosine 1121 carries the phosphotyrosine modification. Positions 1194-1222 (DETGVMDSLLEALQSGAAFRRKRGPRQAN) constitute a DAD domain. A phosphoserine mark is found at serine 1251 and serine 1254.

Belongs to the formin homology family. Diaphanous subfamily. As to quaternary structure, homodimer. Interacts with the GTP-bound form of RHOA. Interacts with RHOC, PFY1, MAPRE1 and BAIAP2. Interacts with APC; acts as a scaffold protein for MAPRE1 and APC to stabilize microtubules and promote cell migration. Interacts with SCAI. Interacts with DCAF7, via FH2 domain. Interacts with NCDN. Interacts with OSBPL10, OSBPL2, VIM, TUBB and DYN1. Post-translationally, phosphorylation at Thr-768 is stimulated by cAMP and regulates stability, complex formation and mitochondrial movement. In terms of tissue distribution, expressed in brain, heart, placenta, lung, kidney, pancreas, liver, skeletal muscle and cochlea. Expressed in platelets.

It is found in the cell membrane. The protein resides in the cell projection. Its subcellular location is the ruffle membrane. The protein localises to the cytoplasm. It localises to the cytoskeleton. It is found in the microtubule organizing center. The protein resides in the centrosome. Its subcellular location is the spindle. The protein localises to the nucleus. Its function is as follows. Actin nucleation and elongation factor required for the assembly of F-actin structures, such as actin cables and stress fibers. Binds to the barbed end of the actin filament and slows down actin polymerization and depolymerization. Required for cytokinesis, and transcriptional activation of the serum response factor. DFR proteins couple Rho and Src tyrosine kinase during signaling and the regulation of actin dynamics. Functions as a scaffold protein for MAPRE1 and APC to stabilize microtubules and promote cell migration. Has neurite outgrowth promoting activity. Acts in a Rho-dependent manner to recruit PFY1 to the membrane. In hear cells, it may play a role in the regulation of actin polymerization in hair cells. The MEMO1-RHOA-DIAPH1 signaling pathway plays an important role in ERBB2-dependent stabilization of microtubules at the cell cortex. It controls the localization of APC and CLASP2 to the cell membrane, via the regulation of GSK3B activity. In turn, membrane-bound APC allows the localization of the MACF1 to the cell membrane, which is required for microtubule capture and stabilization. Plays a role in the regulation of cell morphology and cytoskeletal organization. Required in the control of cell shape. Plays a role in brain development. Also acts as an actin nucleation and elongation factor in the nucleus by promoting nuclear actin polymerization inside the nucleus to drive serum-dependent SRF-MRTFA activity. The polypeptide is Protein diaphanous homolog 1 (DIAPH1) (Homo sapiens (Human)).